A 246-amino-acid chain; its full sequence is High mobility group protein 1 (246 aa).

The HMG box DNA-binding region spans 106 to 179 (PKKPLTVFFA…NYQREKSKYL (74 aa)). Positions 179–246 (LEAKKNGTLP…KKKDKSNSSI (68 aa)) are disordered. The span at 214–227 (PVEKRPHDDDGSSE) shows a compositional bias: basic and acidic residues. A compositionally biased stretch (basic residues) spans 228–238 (KKKKKKKKDKK).

Interacts with FPR1. Interacts with an unidentified DNA helicase. Associates with rDNA.

It localises to the nucleus. The protein localises to the nucleolus. DNA-binding protein that is probably part of the rDNA transcription apparatus. Acts synergetically with the RPA49 subunit of RNA polymerase I during rDNA transcription. May participate in mutagenesis control. This chain is High mobility group protein 1 (HMO1), found in Saccharomyces cerevisiae (strain ATCC 204508 / S288c) (Baker's yeast).